Consider the following 495-residue polypeptide: COP9 signalosome complex subunit 2 (495 aa).

A disordered region spans residues Met-1 to Val-26. The 163-residue stretch at Ala-254–Lys-416 folds into the PCI domain. The tract at residues Pro-426 to Gln-468 is disordered. Polar residues predominate over residues Asp-430–Gly-441. A compositionally biased stretch (low complexity) spans Thr-442–Ser-455.

The protein belongs to the CSN2 family. Component of the CSN complex, probably composed of csn-1, csn-2, csn-3, csn-4, csn-5, csn-6 and csn-7. Within the complex it probably interacts directly with csn-1, csn-3 and csn-4.

It is found in the cytoplasm. The protein resides in the nucleus. Its function is as follows. Essential component of the COP9 signalosome complex (CSN), a complex involved in various cellular and developmental processes. The CSN complex is an essential regulator of the ubiquitin (Ubl) conjugation pathway by mediating the deneddylation of the cullin subunits of the SCF-type E3 ligase complexes, leading to decrease the Ubl ligase activity of SCF. The CSN complex plays an essential role in embryogenesis and oogenesis and is required to regulate microtubule stability in the early embryo. Mediates mei-3/katanin targeting for degradation at the meiosis to mitosis transition via deneddylation of cul-3. The sequence is that of COP9 signalosome complex subunit 2 (csn-2) from Caenorhabditis elegans.